The sequence spans 147 residues: uncharacterized protein (147 aa).

Transmembrane regions (helical) follow at residues 42–62 and 64–84; these read WASL…SPEP and LILQ…ATAF.

Its subcellular location is the cell membrane. This is an uncharacterized protein from Bacillus subtilis (strain 168).